The sequence spans 297 residues: Probable porphobilinogen deaminase (297 aa).

Cysteine 241 is subject to S-(dipyrrolylmethanemethyl)cysteine.

This sequence belongs to the HMBS family. The cofactor is dipyrromethane.

The catalysed reaction is 4 porphobilinogen + H2O = hydroxymethylbilane + 4 NH4(+). It participates in porphyrin-containing compound metabolism; protoporphyrin-IX biosynthesis; coproporphyrinogen-III from 5-aminolevulinate: step 2/4. In terms of biological role, tetrapolymerization of the monopyrrole PBG into the hydroxymethylbilane pre-uroporphyrinogen in several discrete steps. In Pyrobaculum arsenaticum (strain DSM 13514 / JCM 11321 / PZ6), this protein is Probable porphobilinogen deaminase.